Consider the following 245-residue polypeptide: 1-(5-phosphoribosyl)-5-[(5-phosphoribosylamino)methylideneamino] imidazole-4-carboxamide isomerase (245 aa).

Asp-7 serves as the catalytic Proton acceptor. Asp-129 acts as the Proton donor in catalysis.

Belongs to the HisA/HisF family.

It is found in the cytoplasm. The catalysed reaction is 1-(5-phospho-beta-D-ribosyl)-5-[(5-phospho-beta-D-ribosylamino)methylideneamino]imidazole-4-carboxamide = 5-[(5-phospho-1-deoxy-D-ribulos-1-ylimino)methylamino]-1-(5-phospho-beta-D-ribosyl)imidazole-4-carboxamide. Its pathway is amino-acid biosynthesis; L-histidine biosynthesis; L-histidine from 5-phospho-alpha-D-ribose 1-diphosphate: step 4/9. The chain is 1-(5-phosphoribosyl)-5-[(5-phosphoribosylamino)methylideneamino] imidazole-4-carboxamide isomerase from Shewanella putrefaciens (strain CN-32 / ATCC BAA-453).